Consider the following 156-residue polypeptide: Transthyretin-like protein 1 (156 aa).

An N-terminal signal peptide occupies residues 1 to 17 (MKIALSFLFLTSTFSNA). N-linked (GlcNAc...) asparagine glycosylation occurs at Asn151.

This sequence belongs to the nematode transthyretin-like family.

Its subcellular location is the secreted. In Caenorhabditis elegans, this protein is Transthyretin-like protein 1 (ttr-1).